The primary structure comprises 1010 residues: Eukaryotic translation initiation factor 4E transporter (1010 aa).

Residues 10–16 (YSKVDLL) carry the YXXXXLphi motif motif. Disordered stretches follow at residues 154-182 (GSNSEESNEGINTCASKGKAASSPSRKGS), 196-277 (PDHD…RLVE), 289-320 (YDSKKSFDRQGINNRRISGKEPFSTQSRSKRG), 354-391 (NEERSVTEDKNNQIQQLDKNLDAQASKDEASMRNSNDS), and 921-960 (QSNPQMSPPVPGFSDSSDSGNVIKANSLTSPSYQRDERIS). The segment covering 201–211 (CMSSSPTFSTS) has biased composition (polar residues). The span at 227–247 (DNWDYKNEKTVEASIENEKET) shows a compositional bias: basic and acidic residues. A compositionally biased stretch (polar residues) spans 248-263 (SPNGSGSTSSLNQHNQ). 2 stretches are compositionally biased toward basic and acidic residues: residues 354-364 (NEERSVTEDKN) and 372-384 (KNLDAQASKDEAS). Residues 934 to 953 (SDSSDSGNVIKANSLTSPSY) show a composition bias toward polar residues.

Belongs to the 4E-T/EIF4E-T family. Interacts (via YXXXXLphi motif) with eIF4E1. Interacts with DDX6/me31B. As to expression, expressed in all larval and adult organs and tissues, with highest levels in the ovary.

The protein resides in the cytoplasm. The protein localises to the P-body. It is found in the nucleus. In terms of biological role, eIF4E1-binding protein that regulates translation and stability of mRNAs in processing bodies (P-bodies). Probably plays a role in P-bodies to coordinate the storage of translationally inactive mRNAs in the cytoplasm and prevent their degradation. Acts as a binding platform for multiple RNA-binding proteins. Required for the formation of P-bodies. The protein is Eukaryotic translation initiation factor 4E transporter of Drosophila melanogaster (Fruit fly).